Consider the following 267-residue polypeptide: Protein BMH1 (267 aa).

Ser2 is modified (N-acetylserine). A Glycyl lysine isopeptide (Lys-Gly) (interchain with G-Cter in ubiquitin) cross-link involves residue Lys76. At Ser89 the chain carries Phosphoserine. Residues 236 to 267 form a disordered region; that stretch reads DMSESGQAEDQQQQQQHQQQQPPAAAEGEAPK. The segment covering 243-267 has biased composition (low complexity); it reads AEDQQQQQQHQQQQPPAAAEGEAPK.

Belongs to the 14-3-3 family. Homodimer. Interacts with NTH1 (via N-terminus when phosphorylated by PKA); the interaction is direct and activates NTH1. Interacts with FIN1.

Its function is as follows. Involved in growth regulation. The protein is Protein BMH1 (BMH1) of Saccharomyces cerevisiae (strain ATCC 204508 / S288c) (Baker's yeast).